The primary structure comprises 146 residues: MADLDAVLKCWGAVEADFNTVGGLVLARLFKDHPETQKLFPKFAGITGDIAGNAAVAAHGATVLKKLGELLKAKGNHAAIIKPLANSHAKQHKIPINNFKLITEALAHVLHEKAGLDAAGQTALRNVMGIVIADLEANYKELGFTG.

A Globin domain is found at 2–140; sequence ADLDAVLKCW…VIADLEANYK (139 aa). Position 59 (H59) interacts with nitrite. H59 is an O2 binding site. Heme b is bound at residue H88.

Belongs to the globin family. As to quaternary structure, monomeric.

The protein localises to the cytoplasm. It is found in the sarcoplasm. It catalyses the reaction Fe(III)-heme b-[protein] + nitric oxide + H2O = Fe(II)-heme b-[protein] + nitrite + 2 H(+). It carries out the reaction H2O2 + AH2 = A + 2 H2O. Its function is as follows. Monomeric heme protein which primary function is to store oxygen and facilitate its diffusion within muscle tissues. Reversibly binds oxygen through a pentacoordinated heme iron and enables its timely and efficient release as needed during periods of heightened demand. Depending on the oxidative conditions of tissues and cells, and in addition to its ability to bind oxygen, it also has a nitrite reductase activity whereby it regulates the production of bioactive nitric oxide. Under stress conditions, like hypoxia and anoxia, it also protects cells against reactive oxygen species thanks to its pseudoperoxidase activity. The chain is Myoglobin (mb) from Katsuwonus pelamis (Skipjack tuna).